The chain runs to 195 residues: Putative manganese efflux pump MntP (195 aa).

6 consecutive transmembrane segments (helical) span residues 4 to 24 (ILIT…SLAM), 39 to 59 (FVLT…NLGL), 64 to 84 (FLGV…GWQM), 120 to 140 (ILLL…TLGT), 145 to 165 (ILIT…VGFA), and 175 to 195 (GSYA…KFVV).

This sequence belongs to the MntP (TC 9.B.29) family.

The protein localises to the cell membrane. In terms of biological role, probably functions as a manganese efflux pump. The chain is Putative manganese efflux pump MntP from Syntrophomonas wolfei subsp. wolfei (strain DSM 2245B / Goettingen).